Consider the following 469-residue polypeptide: MKHIRTRFAPSPTGYLHIGGVRTALFSWLFARQNNGAFILRIEDTDVARSTQASVDAILEGLRWLQIDWNEGPYYQSQRMDRYREVIEQLVKSDDAYRCYCSKERLIELRNTQLKNKQKPRYDGFCRDKAPRQSNEPFVIRFRNPVEGAVVFDDLIRGTISIDNRELDDLIIARSDGGPTYNLTVVVDDWDMKITHVIRGDDHINNTPRQINILHALGAELPHYGHVPMILGPDGKRLSKRHGAVSVLQYRDEGYLPEALMNYLIRLGWAHGDQEIFSREEMVQLFDISAVSRSPAAFNPEKLLWLNQHYLKTVSPTIIAKAFATQLEKAGTDLRNGPSLEQVIALQAERTKTLKEMAQRSFYFYQEVRSYDEKAARKHLLATIVEPLQRVRERLASLPSWEKEAIHEVIVETAQLHQLKLGQLAQPIRVALTGDTVSPPIDATLYLIGRDSALKRLDHAIRFIHQGMG.

Residues 10-20 (PSPTGYLHIGG) carry the 'HIGH' region motif. 4 residues coordinate Zn(2+): cysteine 99, cysteine 101, cysteine 126, and aspartate 128. Residues 237–241 (RLSKR) carry the 'KMSKS' region motif. Lysine 240 contacts ATP.

Belongs to the class-I aminoacyl-tRNA synthetase family. Glutamate--tRNA ligase type 1 subfamily. In terms of assembly, monomer. It depends on Zn(2+) as a cofactor.

It is found in the cytoplasm. The catalysed reaction is tRNA(Glu) + L-glutamate + ATP = L-glutamyl-tRNA(Glu) + AMP + diphosphate. Functionally, catalyzes the attachment of glutamate to tRNA(Glu) in a two-step reaction: glutamate is first activated by ATP to form Glu-AMP and then transferred to the acceptor end of tRNA(Glu). The chain is Glutamate--tRNA ligase 1 from Coxiella burnetii (strain CbuK_Q154) (Coxiella burnetii (strain Q154)).